We begin with the raw amino-acid sequence, 133 residues long: Ribonuclease VapC17 (133 aa).

Residues Asp7 and Asp93 each coordinate Mg(2+). The PINc domain occupies 30-118 (AICDIGELEW…HHDRDYKRIA (89 aa)).

This sequence belongs to the PINc/VapC protein family. Requires Mg(2+) as cofactor.

Functionally, toxic component of a type II toxin-antitoxin (TA) system. An RNase. The cognate antitoxin is VapB17. The chain is Ribonuclease VapC17 from Mycobacterium tuberculosis (strain CDC 1551 / Oshkosh).